The following is a 441-amino-acid chain: Xaa-Pro dipeptidase (441 aa).

Mn(2+) is bound by residues D244, D255, H336, E381, and E420.

The protein belongs to the peptidase M24B family. Bacterial-type prolidase subfamily. Mn(2+) is required as a cofactor.

The enzyme catalyses Xaa-L-Pro dipeptide + H2O = an L-alpha-amino acid + L-proline. In terms of biological role, splits dipeptides with a prolyl residue in the C-terminal position. This Xanthomonas campestris pv. campestris (strain 8004) protein is Xaa-Pro dipeptidase.